A 541-amino-acid polypeptide reads, in one-letter code: 5' exonuclease Apollo (541 aa).

Lys334 participates in a covalent cross-link: Glycyl lysine isopeptide (Lys-Gly) (interchain with G-Cter in SUMO2). The interval 455–475 (PLLSRGDSGSPARGNQSDCVG) is disordered. The short motif at 492 to 507 (ESRGLALKYLLTPVHF) is the TBM element.

This sequence belongs to the DNA repair metallo-beta-lactamase (DRMBL) family. As to quaternary structure, interacts with MUS81, MRE11 and FANCD2. Interacts with HSPA2, HSPA8 and HSPA14. Interacts with SPAG5. Interacts with TERF2; the interaction is direct. In terms of processing, ubiquitinated, leading to its degradation. Interaction with TERF2 protects it from ubiquitination.

Its subcellular location is the chromosome. It localises to the telomere. It is found in the nucleus. The protein resides in the cytoplasm. The protein localises to the cytoskeleton. Its subcellular location is the microtubule organizing center. It localises to the centrosome. It catalyses the reaction a beta-lactam + H2O = a substituted beta-amino acid. Functionally, 5'-3' exonuclease that plays a central role in telomere maintenance and protection during S-phase. Participates in the protection of telomeres against non-homologous end-joining (NHEJ)-mediated repair, thereby ensuring that telomeres do not fuse. Plays a key role in telomeric loop (T loop) formation by being recruited by TERF2 at the leading end telomeres and by processing leading-end telomeres immediately after their replication via its exonuclease activity: generates 3' single-stranded overhang at the leading end telomeres avoiding blunt leading-end telomeres that are vulnerable to end-joining reactions and expose the telomere end in a manner that activates the DNA repair pathways. Together with TERF2, required to protect telomeres from replicative damage during replication by controlling the amount of DNA topoisomerase (TOP1, TOP2A and TOP2B) needed for telomere replication during fork passage and prevent aberrant telomere topology. Also involved in response to DNA damage: plays a role in response to DNA interstrand cross-links (ICLs) by facilitating double-strand break formation. In case of spindle stress, involved in prophase checkpoint. Possesses beta-lactamase activity, catalyzing the hydrolysis of penicillin G and nitrocefin. Exhibits no activity towards other beta-lactam antibiotic classes including cephalosporins (cefotaxime) and carbapenems (imipenem). This is 5' exonuclease Apollo (Dclre1b) from Mus musculus (Mouse).